The following is a 326-amino-acid chain: Protein-arginine N-acetylglucosaminyltransferase NleB2 (326 aa).

UDP-N-acetyl-alpha-D-glucosamine is bound by residues 45-47, Y69, and 216-219; these read QWF and YLDM. The DXD motif motif lies at 218–220; that stretch reads DMD. Mn(2+) is bound at residue D220. E250 (proton acceptor) is an active-site residue. N317 and S319 together coordinate Mn(2+). UDP-N-acetyl-alpha-D-glucosamine contacts are provided by residues S319 and 324–326; that span reads SSW.

This sequence belongs to the glycosyltransferase NleB family. Mn(2+) is required as a cofactor.

The protein localises to the secreted. Its subcellular location is the host cell. It catalyses the reaction L-arginyl-[protein] + UDP-N-acetyl-alpha-D-glucosamine = N(omega)-(N-acetyl-beta-D-glucosaminyl)-L-arginyl-[protein] + UDP + H(+). Functionally, protein-arginine N-acetylglucosaminyltransferase effector that catalyzes the transfer of a single N-acetylglucosamine (GlcNAc) to a conserved arginine residue of host target proteins. In contrast to NleB1, not able to disrupt TNF signaling in infected cells. Shows a lower enzymatic activity than NleB1. The polypeptide is Protein-arginine N-acetylglucosaminyltransferase NleB2 (Escherichia coli O127:H6 (strain E2348/69 / EPEC)).